The following is a 131-amino-acid chain: SPbeta prophage-derived UPF0715 membrane protein YopD (131 aa).

Helical transmembrane passes span 12–32 (VYTL…YLFV), 38–58 (AIAL…YLVF), 75–95 (LINF…FWFV), and 108–128 (FEYY…DSIF).

Belongs to the UPF0715 family.

It localises to the cell membrane. This is SPbeta prophage-derived UPF0715 membrane protein YopD (yopD) from Bacillus subtilis (strain 168).